The following is a 1383-amino-acid chain: Spike glycoprotein (1383 aa).

The signal sequence occupies residues 1-25; sequence MRSLIYFWLLLPVLPTLSLPQDVTR. The S1 stretch occupies residues 26-734; sequence CQSTTNFRRF…TRELPGFFYH (709 aa). Over 26-1324 the chain is Virion surface; that stretch reads CQSTTNFRRF…NRVETYIKWP (1299 aa). The segment at 617 to 745 is interaction with host ANPEP; sequence FQFTKGELIT…NDGSNCTEPV (129 aa). The interval 735–1383 is S2; that stretch reads SNDGSNCTEP…YEAFEKVHVQ (649 aa). The interval 955–975 is fusion peptide; sequence IGGMALGGITAAAALPFSYAV. The interval 969–1088 is heptad repeat 1 (HR1); sequence LPFSYAVQAR…QVDRLITGRL (120 aa). Coiled-coil stretches lie at residues 1036 to 1080 and 1272 to 1314; these read QEVV…DVQV and TYLN…LEWL. The heptad repeat 2 (HR2) stretch occupies residues 1240–1336; it reads PDYIDVNKTL…VWLIIVIVLI (97 aa). A helical transmembrane segment spans residues 1325–1344; the sequence is WWVWLIIVIVLIFVVSLLVF. Topologically, residues 1345–1383 are intravirion; it reads CCISTGCCGCCGCCGACFSGCCRGPRLQPYEAFEKVHVQ. Positions 1379 to 1383 match the KxHxx motif; that stretch reads KVHVQ.

The protein belongs to the alphacoronaviruses spike protein family. In terms of assembly, homotrimer. During virus morphogenesis, found in a complex with M and HE proteins. Interacts with host ANPEP.

Its subcellular location is the virion membrane. The protein localises to the host endoplasmic reticulum-Golgi intermediate compartment membrane. Its function is as follows. S1 region attaches the virion to the cell membrane by interacting with host ANPEP/aminopeptidase N, initiating the infection. Binding to the receptor probably induces conformational changes in the S glycoprotein unmasking the fusion peptide of S2 region and activating membranes fusion. S2 region belongs to the class I viral fusion protein. Under the current model, the protein has at least 3 conformational states: pre-fusion native state, pre-hairpin intermediate state, and post-fusion hairpin state. During viral and target cell membrane fusion, the coiled coil regions (heptad repeats) regions assume a trimer-of-hairpins structure, positioning the fusion peptide in close proximity to the C-terminal region of the ectodomain. The formation of this structure appears to drive apposition and subsequent fusion of viral and target cell membranes. This chain is Spike glycoprotein, found in Porcine epidemic diarrhea virus (strain CV777) (PEDV).